Consider the following 597-residue polypeptide: Arginine--tRNA ligase (597 aa).

Residues 124–134 (PNVAKPLHVGH) carry the 'HIGH' region motif.

It belongs to the class-I aminoacyl-tRNA synthetase family. As to quaternary structure, monomer.

It localises to the cytoplasm. It carries out the reaction tRNA(Arg) + L-arginine + ATP = L-arginyl-tRNA(Arg) + AMP + diphosphate. The chain is Arginine--tRNA ligase from Agathobacter rectalis (strain ATCC 33656 / DSM 3377 / JCM 17463 / KCTC 5835 / VPI 0990) (Eubacterium rectale).